The following is a 238-amino-acid chain: ATP synthase subunit a (238 aa).

Transmembrane regions (helical) follow at residues 16-36, 79-99, 103-123, 129-149, and 209-229; these read LIWL…TVLF, GLFM…FFPV, FVFG…SSLL, GLMS…MVVV, and VFGA…CVLL.

Belongs to the ATPase A chain family. As to quaternary structure, F-type ATPases have 2 components, CF(1) - the catalytic core - and CF(0) - the membrane proton channel. CF(1) has five subunits: alpha(3), beta(3), gamma(1), delta(1), epsilon(1). CF(0) has three main subunits: a, b and c.

It localises to the mitochondrion inner membrane. Mitochondrial membrane ATP synthase (F(1)F(0) ATP synthase or Complex V) produces ATP from ADP in the presence of a proton gradient across the membrane which is generated by electron transport complexes of the respiratory chain. F-type ATPases consist of two structural domains, F(1) - containing the extramembraneous catalytic core and F(0) - containing the membrane proton channel, linked together by a central stalk and a peripheral stalk. During catalysis, ATP synthesis in the catalytic domain of F(1) is coupled via a rotary mechanism of the central stalk subunits to proton translocation. Key component of the proton channel; it may play a direct role in the translocation of protons across the membrane. This chain is ATP synthase subunit a (ATP6), found in Mytilus edulis (Blue mussel).